Here is a 181-residue protein sequence, read N- to C-terminus: Caveolin-1 (181 aa).

The Cytoplasmic portion of the chain corresponds to 1-107; that stretch reads MTGGLRDGEK…TKYWCYRLLT (107 aa). Positions 108–128 form an intramembrane region, helical; it reads ALVGIPLALIWGIFFAILSFI. Residues 129–181 lie on the Cytoplasmic side of the membrane; sequence HIWAVVPCVKSYLIEIHCISRVYSICVHTFCDPLFEAMGKCLGGVRIRTSKEV. S-palmitoyl cysteine attachment occurs at residues C136, C146, and C159.

Belongs to the caveolin family. As to quaternary structure, homooligomer.

It localises to the golgi apparatus membrane. Its subcellular location is the cell membrane. It is found in the membrane. The protein resides in the caveola. The protein localises to the membrane raft. Functionally, may act as a positive regulator of T-cell coactivation. May act as a scaffolding protein within caveolar membranes. Interacts directly with G-protein alpha subunits and can functionally regulate their activity. The polypeptide is Caveolin-1 (cav1) (Takifugu rubripes (Japanese pufferfish)).